The chain runs to 334 residues: Succinate receptor 1 (334 aa).

Topologically, residues 5–31 (MAWNATCKNWLAAEAALEKYYLSIFYG) are extracellular. Residue asparagine 8 is glycosylated (N-linked (GlcNAc...) asparagine). A helical membrane pass occupies residues 32 to 52 (IEFVVGVLGNTIVVYGYIFSL). The Cytoplasmic segment spans residues 53–59 (KNWNSSN). A helical transmembrane segment spans residues 60–80 (IYLFNLSVSDLAFLCTLPMLI). The Extracellular portion of the chain corresponds to 81 to 103 (RSYANGNWIYGDVLCISNRYVLH). Cysteine 95 and cysteine 172 are joined by a disulfide. Residues 104–124 (ANLYTSILFLTFISIDRYLII) traverse the membrane as a helical segment. At 125–137 (KYPFREHLLQKKE) the chain is on the cytoplasmic side. A helical membrane pass occupies residues 138–158 (FAILISLAIWVLVTLELLPIL). Residues 159–185 (PLINPVITDNGTTCNDFASSGDPNYNL) lie on the Extracellular side of the membrane. A glycan (N-linked (GlcNAc...) asparagine) is linked at asparagine 168. The chain crosses the membrane as a helical span at residues 186-206 (IYSMCLTLLGFLIPLFVMCFF). Over 207-230 (YYKIALFLKQRNRQVATALPLEKP) the chain is Cytoplasmic. The helical transmembrane segment at 231 to 251 (LNLVIMAVVIFSVLFTPYHVM) threads the bilayer. The Extracellular segment spans residues 252-281 (RNVRIASRLGSWKQYQCTQVVINSFYIVTR). The helical transmembrane segment at 282–302 (PLAFLNSVINPVFYFLLGDHF) threads the bilayer. Residues 303-334 (RDMLMNQLRHNFKSLTSFSRWAHELLLSFREK) are Cytoplasmic-facing.

It belongs to the G-protein coupled receptor 1 family. As to expression, expressed specifically in kidney. Highly expressed in immature dendritic cells, expression rapidly downregulates after maturation. Also expressed in macrophages.

The protein resides in the cell membrane. Functionally, g protein-coupled receptor for succinate able to mediate signaling through Gq/GNAQ or Gi/GNAI second messengers depending on the cell type and the processes regulated. Succinate-SUCNR1 signaling serves as a link between metabolic stress, inflammation and energy homeostasis. In macrophages, plays a range of immune-regulatory roles. During inflammation, succinate-SUCNR1 signaling may act as an anti-inflammatory mediator or boost inflammation depending on the inflammatory status of cells. Hyperpolarizes M2 macrophages versus M1 phenotype through Gq signaling by regulating the transcription of genes involved in immune function. In activated M1 macrophages, plays a pro-inflammatory role in response to LPS. Expressed in dendritic cells, where it is involved in the sensing of immunological danger and enhances immunity. Mediates succinate triggered intracelleular calcium mobilization, induces migratory responses and acts in synergy with Toll-like receptor ligands for the production of proinflammatory cytokines as well as an enhancement of antigen-specific activation of helper T cells. In the small intestine, mediates the activation of tuft cells by dietary succinate and triggers type 2 immunity. In adipocytes, plays an important role in the control of energy metabolism. In response to succinate, controls leptin expression in an AMPK-JNK-CEBPA-dependent as well as circadian clock-regulated manner. In muscle tissue, is expressed in non-muscle cells and coordinates muscle remodeling in response to the succinate produced during exercise training in a paracrine manner. In retina, acts as a mediator of vessel growth during retinal development. In response to succinate, regulates the production of angiogenic factors, including VEGF, by retinal ganglion neurons. This Homo sapiens (Human) protein is Succinate receptor 1.